Reading from the N-terminus, the 143-residue chain is 3-hydroxyacyl-[acyl-carrier-protein] dehydratase FabZ (143 aa).

His-48 is a catalytic residue.

It belongs to the thioester dehydratase family. FabZ subfamily.

It is found in the cytoplasm. The catalysed reaction is a (3R)-hydroxyacyl-[ACP] = a (2E)-enoyl-[ACP] + H2O. Involved in unsaturated fatty acids biosynthesis. Catalyzes the dehydration of short chain beta-hydroxyacyl-ACPs and long chain saturated and unsaturated beta-hydroxyacyl-ACPs. This is 3-hydroxyacyl-[acyl-carrier-protein] dehydratase FabZ from Roseiflexus sp. (strain RS-1).